A 606-amino-acid polypeptide reads, in one-letter code: Probable potassium transport system protein Kup (606 aa).

12 helical membrane-spanning segments follow: residues 18–38, 46–66, 97–117, 138–158, 166–186, 212–232, 247–267, 287–307, 339–359, 368–388, 395–415, and 418–438; these read GLVF…VFAL, VFGI…AEYA, LTFV…DGVI, GLHQ…LFVF, VAGA…LSGA, GLAG…GEAL, AWYI…AFII, LYIP…QAMI, IYIG…MLVF, AYGL…ILIL, WKAV…TACL, and LPHG…TILV.

It belongs to the HAK/KUP transporter (TC 2.A.72) family.

The protein resides in the cell inner membrane. The enzyme catalyses K(+)(in) + H(+)(in) = K(+)(out) + H(+)(out). Its function is as follows. Transport of potassium into the cell. Likely operates as a K(+):H(+) symporter. The chain is Probable potassium transport system protein Kup from Trichlorobacter lovleyi (strain ATCC BAA-1151 / DSM 17278 / SZ) (Geobacter lovleyi).